We begin with the raw amino-acid sequence, 501 residues long: Lysine--tRNA ligase (501 aa).

Mg(2+) contacts are provided by Glu-412 and Glu-419.

It belongs to the class-II aminoacyl-tRNA synthetase family. Homodimer. Mg(2+) serves as cofactor.

The protein resides in the cytoplasm. It catalyses the reaction tRNA(Lys) + L-lysine + ATP = L-lysyl-tRNA(Lys) + AMP + diphosphate. The polypeptide is Lysine--tRNA ligase (Chlorobium luteolum (strain DSM 273 / BCRC 81028 / 2530) (Pelodictyon luteolum)).